Here is a 219-residue protein sequence, read N- to C-terminus: PRELI domain-containing protein 1, mitochondrial (219 aa).

Residues 36–174 (TEDIVHREVT…ILAKLQGEAP (139 aa)) enclose the PRELI/MSF1 domain.

In terms of assembly, forms a complex with TRIAP1 in the mitochondrion intermembrane space. Interacts with OPA1 and AIFM1. Highly expressed in fetal liver; less expressed in fetal brain, lung, and kidney. At the adult stage, expression is drastically reduced in the liver but highly expressed in the spleen, brain, lung, lymph nodes and peripheral blood leukocytes.

It is found in the mitochondrion. The protein resides in the mitochondrion intermembrane space. The enzyme catalyses a 1,2-diacyl-sn-glycero-3-phosphate(in) = a 1,2-diacyl-sn-glycero-3-phosphate(out). Involved in the modulation of the mitochondrial apoptotic pathway by ensuring the accumulation of cardiolipin (CL) in mitochondrial membranes. In vitro, the TRIAP1:PRELID1 complex mediates the transfer of phosphatidic acid (PA) between liposomes and probably functions as a PA transporter across the mitochondrion intermembrane space to provide PA for CL synthesis in the inner membrane. Regulates the mitochondrial apoptotic pathway in primary Th cells. Regulates Th cell differentiation by down-regulating STAT6 thereby reducing IL-4-induced Th2 cell number. May be important for the development of vital and immunocompetent organs. The polypeptide is PRELI domain-containing protein 1, mitochondrial (PRELID1) (Homo sapiens (Human)).